The sequence spans 236 residues: 2-C-methyl-D-erythritol 4-phosphate cytidylyltransferase (236 aa).

Belongs to the IspD/TarI cytidylyltransferase family. IspD subfamily.

It carries out the reaction 2-C-methyl-D-erythritol 4-phosphate + CTP + H(+) = 4-CDP-2-C-methyl-D-erythritol + diphosphate. The protein operates within isoprenoid biosynthesis; isopentenyl diphosphate biosynthesis via DXP pathway; isopentenyl diphosphate from 1-deoxy-D-xylulose 5-phosphate: step 2/6. In terms of biological role, catalyzes the formation of 4-diphosphocytidyl-2-C-methyl-D-erythritol from CTP and 2-C-methyl-D-erythritol 4-phosphate (MEP). This Burkholderia thailandensis (strain ATCC 700388 / DSM 13276 / CCUG 48851 / CIP 106301 / E264) protein is 2-C-methyl-D-erythritol 4-phosphate cytidylyltransferase.